A 450-amino-acid chain; its full sequence is uncharacterized protein (450 aa).

Residues 387 to 416 (ELDEKNNNKEENKNQDLHEPKESSSEDLLK) show a composition bias toward basic and acidic residues. Residues 387 to 439 (ELDEKNNNKEENKNQDLHEPKESSSEDLLKRLNNLKINTNEGPVQDNENHDNE) form a disordered region.

This is an uncharacterized protein from Saccharomyces cerevisiae (strain ATCC 204508 / S288c) (Baker's yeast).